The following is a 246-amino-acid chain: Breast cancer metastasis-suppressor 1 (246 aa).

The interval 1-57 is disordered; it reads MPVQPPSKDTEEMEAEGDSAAEMNGEEEESEEERSGSQTESEEESSEMDDEDYERRR. 2 stretches are compositionally biased toward acidic residues: residues 11–32 and 40–52; these read EEME…ESEE and ESEE…DDED. Residues 51–98 adopt a coiled-coil conformation; that stretch reads EDYERRRSECVSEMLDLEKQFSELKEKLFRERLSQLRLRLEEVGAERA. Glycyl lysine isopeptide (Lys-Gly) (interchain with G-Cter in SUMO2) cross-links involve residues lysine 184 and lysine 242.

This sequence belongs to the BRMS1 family. In terms of assembly, homohexamer (Potential). Interacts with SNX6, HDAC1 and RELA. Interacts with ARID4A. Identified in mSin3A corepressor complexes together with SIN3A, SIN3B, RBBP4, RBBP7, SAP30, SUDS3, ARID4A, HDAC1 and HDAC2. Interacts with SPOP; this recruits the protein to a ubiquitin ligase complex containing SPOP and CUL3. Ubiquitinated by a cullin-RING-based BCR (BTB-CUL3-RBX1) E3 ubiquitin-protein ligase complex containing SPOP, leading to proteasomal degradation. As to expression, expression levels are higher in term placentas than in early placentas. Low levels of expression observed in normal pregnancies and in molar pregnancies.

The protein resides in the nucleus. Its subcellular location is the cytoplasm. Transcriptional repressor. Down-regulates transcription activation by NF-kappa-B by promoting the deacetylation of RELA at 'Lys-310'. Promotes HDAC1 binding to promoter regions. Down-regulates expression of anti-apoptotic genes that are controlled by NF-kappa-B. Promotes apoptosis in cells that have inadequate adherence to a substrate, a process called anoikis, and may thereby inhibit metastasis. May be a mediator of metastasis suppression in breast carcinoma. In Homo sapiens (Human), this protein is Breast cancer metastasis-suppressor 1 (BRMS1).